The primary structure comprises 126 residues: Small ribosomal subunit protein bS6 (126 aa).

The interval 101 to 126 (VMMKAKEERSAKREDAAPRAEEAAAE) is disordered. A compositionally biased stretch (basic and acidic residues) spans 104-126 (KAKEERSAKREDAAPRAEEAAAE).

It belongs to the bacterial ribosomal protein bS6 family.

Functionally, binds together with bS18 to 16S ribosomal RNA. The chain is Small ribosomal subunit protein bS6 from Aliivibrio fischeri (strain ATCC 700601 / ES114) (Vibrio fischeri).